Reading from the N-terminus, the 228-residue chain is 6-carboxyhexanoate--CoA ligase (228 aa).

The protein belongs to the BioW family. As to quaternary structure, homodimer. Mg(2+) serves as cofactor.

The enzyme catalyses heptanedioate + ATP + CoA = 6-carboxyhexanoyl-CoA + AMP + diphosphate. The protein operates within metabolic intermediate metabolism; pimeloyl-CoA biosynthesis; pimeloyl-CoA from pimelate: step 1/1. Its function is as follows. Catalyzes the transformation of pimelate into pimeloyl-CoA with concomitant hydrolysis of ATP to AMP. The polypeptide is 6-carboxyhexanoate--CoA ligase (Staphylococcus epidermidis (strain ATCC 35984 / DSM 28319 / BCRC 17069 / CCUG 31568 / BM 3577 / RP62A)).